The following is an 80-amino-acid chain: MTTPAAPRRPFFRRRKTCPFSGPNAPKIDYKDTRLLSRYISERGKIVPSRITAVSAKKQRELAQAIKRARFLGLLPYVIR.

The protein belongs to the bacterial ribosomal protein bS18 family. Part of the 30S ribosomal subunit. Forms a tight heterodimer with protein bS6.

In terms of biological role, binds as a heterodimer with protein bS6 to the central domain of the 16S rRNA, where it helps stabilize the platform of the 30S subunit. The sequence is that of Small ribosomal subunit protein bS18 from Beijerinckia indica subsp. indica (strain ATCC 9039 / DSM 1715 / NCIMB 8712).